The primary structure comprises 394 residues: Ceramide glucosyltransferase (394 aa).

Residues 1-10 (MALLDLALEG) lie on the Lumenal side of the membrane. The helical transmembrane segment at 11 to 32 (MAVFGFVLFLVLWLMHFMAIIY) threads the bilayer. Residues 33-195 (TRLHLNKKAT…QVYFGTSHPR (163 aa)) are Cytoplasmic-facing. A short sequence motif (D1) is located at residue D92. K117 bears the N6-acetyllysine mark. Residue D144 is a short sequence motif, D2. The chain crosses the membrane as a helical span at residues 196 to 215 (YYISANVTGFKCVTGMSCLM). The Lumenal segment spans residues 216–287 (RKDVLDQAGG…KLRINMLPAT (72 aa)). Residue D236 is a short sequence motif, D3. D236 acts as the Proton acceptor in catalysis. The (Q/R)XXRW signature appears at 272 to 276 (RMIRW). The helical transmembrane segment at 288-304 (IICEPISECFVASLIIG) threads the bilayer. Residues 305–309 (WAAHH) are Cytoplasmic-facing. A helical transmembrane segment spans residues 310-328 (VFRWDIMVFFMCHCLAWFI). Over 329 to 348 (FDYIQLRGVQGGTLCFSKLD) the chain is Lumenal. The helical transmembrane segment at 349–369 (YAVAWFIRESMTIYIFLSALW) threads the bilayer. Topologically, residues 370–394 (DPTISWRTGRYRLRCGGTAEEILDV) are cytoplasmic.

This sequence belongs to the glycosyltransferase 2 family. Interacts with RTN1; regulates the ceramide glucosyltransferase activity of UGCG. Found in all tissues examined.

It is found in the golgi apparatus membrane. The catalysed reaction is an N-acylsphing-4-enine + UDP-alpha-D-glucose = a beta-D-glucosyl-(1&lt;-&gt;1')-N-acylsphing-4-enine + UDP + H(+). The enzyme catalyses UDP-alpha-D-xylose + an N-acylsphing-4-enine = a beta-D-xylosyl-(1&lt;-&gt;1')-N-acylsphing-4-enine + UDP + H(+). It catalyses the reaction N-(9Z-octadecenoyl)-sphing-4-enine + UDP-alpha-D-xylose = beta-D-xylosyl-(1&lt;-&gt;1')-N-(9Z-octadecenoyl)-sphing-4-enine + UDP + H(+). The protein operates within lipid metabolism; sphingolipid metabolism. Functionally, participates in the initial step of the glucosylceramide-based glycosphingolipid/GSL synthetic pathway at the cytosolic surface of the Golgi. Catalyzes the transfer of glucose from UDP-glucose to ceramide to produce glucosylceramide/GlcCer (such as beta-D-glucosyl-(1&lt;-&gt;1')-N-acylsphing-4-enine). GlcCer is the core component of glycosphingolipids/GSLs, amphipathic molecules consisting of a ceramide lipid moiety embedded in the outer leaflet of the membrane, linked to one of hundreds of different externally oriented oligosaccharide structures. Glycosphingolipids are essential components of membrane microdomains that mediate membrane trafficking and signal transduction, implicated in many fundamental cellular processes, including growth, differentiation, migration, morphogenesis, cell-to-cell and cell-to-matrix interactions. They are required for instance in the proper development and functioning of the nervous system. As an example of their role in signal transduction, they regulate the leptin receptor/LEPR in the leptin-mediated signaling pathway. They also play an important role in the establishment of the skin barrier regulating keratinocyte differentiation and the proper assembly of the cornified envelope. The biosynthesis of GSLs is also required for the proper intestinal endocytic uptake of nutritional lipids. Catalyzes the synthesis of xylosylceramide/XylCer (such as beta-D-xylosyl-(1&lt;-&gt;1')-N-acylsphing-4-enine) using UDP-Xyl as xylose donor. This is Ceramide glucosyltransferase from Homo sapiens (Human).